Here is a 263-residue protein sequence, read N- to C-terminus: Homeobox protein CDX-1 (263 aa).

The disordered stretch occupies residues 47 to 108 (PGINSDPHHG…VQPPGSGLLP (62 aa)). Residues 82–97 (SSANPTQIAFSPSDYN) show a composition bias toward polar residues. The homeobox DNA-binding region spans 150–209 (KDKYRVVYTDHQRLELEKEFHYSRYITIRRKAELAAALGLTERQVKIWFQNRRAKERKVN). Positions 153-174 (YRVVYTDHQRLELEKEFHYSRY) are interaction with DNA. The interval 192–203 (RQVKIWFQNRRA) is interaction with 5-mCpG DNA. Over residues 204–213 (KERKVNKKKM) the composition is skewed to basic residues. Residues 204 to 263 (KERKVNKKKMQQQSQQASTTTPTPPSVGTTAGMGGLCSSSSSNSNLVSPSSMPIKEEYLS) are disordered. Low complexity-rich tracts occupy residues 214-233 (QQQS…VGTT) and 241-254 (SSSS…SPSS).

This sequence belongs to the Caudal homeobox family.

It localises to the nucleus. Its function is as follows. Plays a role in transcriptional regulation. Involved in activated KRAS-mediated transcriptional activation of PRKD1. Binds to the PRKD1 promoter. Could play a role in the terminal differentiation of the intestine. Binds preferentially to methylated DNA. This chain is Homeobox protein CDX-1 (cdx1), found in Xenopus laevis (African clawed frog).